Reading from the N-terminus, the 139-residue chain is FAD synthase (139 aa).

ATP contacts are provided by residues 8–9 (VF), 13–16 (HPGH), aspartate 92, and tyrosine 119.

This sequence belongs to the archaeal FAD synthase family. As to quaternary structure, homodimer. It depends on a divalent metal cation as a cofactor.

The catalysed reaction is FMN + ATP + H(+) = FAD + diphosphate. Its pathway is cofactor biosynthesis; FAD biosynthesis; FAD from FMN: step 1/1. Its function is as follows. Catalyzes the transfer of the AMP portion of ATP to flavin mononucleotide (FMN) to produce flavin adenine dinucleotide (FAD) coenzyme. This Picrophilus torridus (strain ATCC 700027 / DSM 9790 / JCM 10055 / NBRC 100828 / KAW 2/3) protein is FAD synthase.